The primary structure comprises 572 residues: Myb-like protein Y (572 aa).

Residues 196–211 show a composition bias toward polar residues; it reads QSQSQLPTATNNNNKQ. The tract at residues 196-283 is disordered; sequence QSQSQLPTAT…NNNNNNNNNE (88 aa). Composition is skewed to low complexity over residues 222-237 and 260-281; these read TATA…TTTT and NDNN…NNNN. A Myb-like domain is found at 311–360; sequence PWTVEDQKKLEDALTKYPPSRFSSVSRWQMVSKELGISPKAVALRYNQML. A disordered region spans residues 367–456; it reads KPSLQQQQQQ…TTVTPNMTTP (90 aa). 2 stretches are compositionally biased toward low complexity: residues 371–392 and 414–425; these read QQQQ…TTTT and SSFSSPSSSSKE. Over residues 426–435 the composition is skewed to basic and acidic residues; the sequence is SPNKKEKTTH. The span at 436 to 455 shows a compositional bias: low complexity; that stretch reads DTTTTTNTATTTTVTPNMTT.

The protein is Myb-like protein Y (mybY) of Dictyostelium discoideum (Social amoeba).